We begin with the raw amino-acid sequence, 285 residues long: NAD kinase (285 aa).

The Proton acceptor role is filled by Asp-68. Residues 68–69, 142–143, Arg-153, Lys-170, Asp-172, and Gln-242 each bind NAD(+); these read DG and ND.

The protein belongs to the NAD kinase family. Requires a divalent metal cation as cofactor.

It is found in the cytoplasm. It carries out the reaction NAD(+) + ATP = ADP + NADP(+) + H(+). Its function is as follows. Involved in the regulation of the intracellular balance of NAD and NADP, and is a key enzyme in the biosynthesis of NADP. Catalyzes specifically the phosphorylation on 2'-hydroxyl of the adenosine moiety of NAD to yield NADP. The chain is NAD kinase from Koribacter versatilis (strain Ellin345).